The chain runs to 325 residues: Glutarate 2-hydroxylase (325 aa).

Fe cation contacts are provided by histidine 160, aspartate 162, and histidine 292.

Belongs to the glutarate hydroxylase family. Homotetramer. Fe(2+) serves as cofactor.

It catalyses the reaction glutarate + 2-oxoglutarate + O2 = (S)-2-hydroxyglutarate + succinate + CO2. It participates in amino-acid degradation. Its function is as follows. Acts as an alpha-ketoglutarate-dependent dioxygenase catalyzing hydroxylation of glutarate (GA) to L-2-hydroxyglutarate (L2HG). Functions in a L-lysine degradation pathway that proceeds via cadaverine, glutarate and L-2-hydroxyglutarate. The polypeptide is Glutarate 2-hydroxylase (Salmonella typhimurium (strain SL1344)).